A 131-amino-acid polypeptide reads, in one-letter code: Translation initiation factor 5A (131 aa).

Lys-37 is subject to Hypusine.

It belongs to the eIF-5A family.

The protein resides in the cytoplasm. Functions by promoting the formation of the first peptide bond. The sequence is that of Translation initiation factor 5A (eIF5A) from Methanococcus vannielii (strain ATCC 35089 / DSM 1224 / JCM 13029 / OCM 148 / SB).